We begin with the raw amino-acid sequence, 89 residues long: Protein WFDC9 (89 aa).

The first 23 residues, 1-23 (MKPWILLLVMFISGVVMLLPVLG), serve as a signal peptide directing secretion.

The protein localises to the secreted. The protein is Protein WFDC9 (WFDC9) of Homo sapiens (Human).